A 70-amino-acid polypeptide reads, in one-letter code: Large ribosomal subunit protein bL31 (70 aa).

Residues C16, C18, C37, and C40 each contribute to the Zn(2+) site.

This sequence belongs to the bacterial ribosomal protein bL31 family. Type A subfamily. In terms of assembly, part of the 50S ribosomal subunit. The cofactor is Zn(2+).

Binds the 23S rRNA. The protein is Large ribosomal subunit protein bL31 of Enterobacter sp. (strain 638).